The chain runs to 488 residues: Ammonium transporter 1 member 1 (488 aa).

The next 11 helical transmembrane spans lie at 47-69 (TYLL…LLAG), 90-109 (LFYY…NGFI), 129-148 (FLYQ…GSIA), 153-175 (FVAY…SHWF), 195-217 (VIDF…YGAL), 238-257 (HSAS…WYGF), 281-303 (AVGR…TLFG), 316-333 (VCNG…GCSV), 337-356 (WAAI…FNML), 368-387 (AAQL…GLFA), and 418-440 (HIIQ…FYIL).

This sequence belongs to the ammonia transporter channel (TC 1.A.11.2) family. As to expression, root hairs and leaves.

The protein resides in the membrane. Functionally, ammonium transporter that may be involved in ammonium uptake from the soil. This chain is Ammonium transporter 1 member 1 (AMT1-1), found in Solanum lycopersicum (Tomato).